A 417-amino-acid polypeptide reads, in one-letter code: Putative competence-damage inducible protein (417 aa).

It belongs to the CinA family.

This Leuconostoc citreum (strain KM20) protein is Putative competence-damage inducible protein.